The following is a 915-amino-acid chain: Metabotropic glutamate receptor 7 (915 aa).

The first 34 residues, 1-34 (MVQLGKLLRVLTLMKFPCCVLEVLLCVLAAAARG), serve as a signal peptide directing secretion. The Extracellular segment spans residues 35–590 (QEMYAPHSIR…IIKLEWHSPW (556 aa)). A disulfide bond links C67 and C109. An N-linked (GlcNAc...) asparagine glycan is attached at N98. Residues S159, 180–182 (AST), Y230, and D314 each bind L-glutamate. Disulfide bonds link C249/C541, C374/C390, C430/C437, C523/C542, C527/C545, C548/C560, and C563/C576. Residue K407 coordinates L-glutamate. Residues N458 and N486 are each glycosylated (N-linked (GlcNAc...) asparagine). N572 carries N-linked (GlcNAc...) asparagine glycosylation. A helical membrane pass occupies residues 591–615 (AVIPVFLAMLGIIATIFVMATFIRY). Topologically, residues 616–627 (NDTPIVRASGRE) are cytoplasmic. Residues 628–648 (LSYVLLTGIFLCYIITFLMIA) form a helical membrane-spanning segment. Over 649 to 654 (KPDVAV) the chain is Extracellular. A helical membrane pass occupies residues 655-675 (CSFRRVFLGLGMCISYAALLT). At 676–702 (KTNRIYRIFEQGKKSVTAPRLISPTSQ) the chain is on the cytoplasmic side. A helical membrane pass occupies residues 703 to 723 (LAITSSLISVQLLGVFIWFGV). The Extracellular segment spans residues 724-753 (DPPNIIIDYDEHKTMNPEQARGVLKCDITD). Residues 754 to 775 (LQIICSLGYSILLMVTCTVYAI) form a helical membrane-spanning segment. At 776–788 (KTRGVPENFNEAK) the chain is on the cytoplasmic side. Residues 789–810 (PIGFTMYTTCIVWLAFIPIFFG) form a helical membrane-spanning segment. Over 811-825 (TAQSAEKLYIQTTTL) the chain is Extracellular. Residues 826-850 (TISMNLSASVALGMLYMPKVYIIIF) form a helical membrane-spanning segment. Over 851–915 (HPELNVQKRK…KYVSYNNLVI (65 aa)) the chain is Cytoplasmic. The disordered stretch occupies residues 874-895 (SRLSHKPSDRPNGEAKTELCEN). Residues 879–892 (KPSDRPNGEAKTEL) are compositionally biased toward basic and acidic residues. S900 is modified (phosphoserine).

It belongs to the G-protein coupled receptor 3 family. As to quaternary structure, homodimer. Interacts with PICK1. In terms of tissue distribution, widely distributed throughout the brain.

Its subcellular location is the cell membrane. Functionally, G-protein coupled receptor activated by glutamate that regulates axon outgrowth through the MAPK-cAMP-PKA signaling pathway during neuronal development. Ligand binding causes a conformation change that triggers signaling via guanine nucleotide-binding proteins (G proteins) and modulates the activity of downstream effectors, such as adenylate cyclase that it inhibits. This chain is Metabotropic glutamate receptor 7 (Grm7), found in Rattus norvegicus (Rat).